The primary structure comprises 1207 residues: MVDVNKFESMRIGIASPQKIRYWSFGEVKKPETINYRTQKPEREGLFDERIFGPQKDWECACGKLKGVFYKNQVCELCGVQVTTAKSRRERMGHIELAAPISHIWYFKGIPSRMGLALDMSPRALEEVIYFASYVVIDPKETDLEKKQLLTEREYREQLLKNGFGSFVAKMGAEAIQDLLNDVDIDKEVAELKEELKTVTGQRRVKIIRRLDVLSAFRKSGNALSWMVLNVLPVIPPDLRPMVQLDGGRFATSDLNDLYRRVINRNNRLKRLMELNAPNIIVQNEKRMLQEAVDTLIDNGRRGRPITGAGNRPLKSLSHMLKGKQGRFRQNLLGKRVDYSGRSVIAVGPTLKMYQCGVPREMAIELFKPFVMAQLVKKELAANIRAAKRKVERQDSDVWDVLETVVKEHPVLLNRAPTLHRLGIQAFEPVLIDGKAIRLHPLACEAYNADFDGDQMAIHLPLSEEAQAEARLLMLAAEHILNPKDGKPVVTPSQDMVLGNYYLTMEEKGREGEGMIFATPEEVEIAMRNGYVHLHTRIGIATKSLNKPWTENQQDKILVTTVGKVIFNSIIPEGMPYLNEPTDVNLTTSTDDRFFMDAGQNIKEVLAGIDTVRPFKKGYLGNIIAEVFKRYRTTATSEYLDRLKDLGYHQSTLAGLTVGIADIPVVEDKHEIIDAAHKRVEQITKQFRRGLITDDERYNAVTGVWRDAKESLEKRLIEEQDLTNPIVMMMDSGARGNISNFSQLAGMRGLMAAPNGKIMELPIISNFREGLSVLEMFFSTHGARKGMTDTALKTADSGYLTRRLVDVAQDVIIREDDCGTDRGLVIADIATGKEMVEPLFERLVGRYTRKSVLHPETGEMIIGDDTLISEDIARKIIEADVKEVTIRSVFTCKTPHGVCKHCYGINLATGDAVEVGEAVGTIAAQSIGEPGTQLTMRTFHTGGVASSSDITQGLPRVQEIFEARNPKGEAIITEVTGTVESIVEDGATRTREITVKGKTDTRSYTVGMADVLMVEEGEFIHRGAPLIQGSIEPKHLLQVRDALSVETYLLGEVQKTYRSQGVEIGDKHIEVMIRQMLRKVRIMDNGSTDVLPGTLMDISDFEALNETALLNGEMPATGRPVLMGITKASLETNSFLSAASFQETTRVLTDAAIRGKEDHLLGLKENVIIGKIIPAGTGMFRYRNIEPLADLTNAPEVKEVETETVEN.

Residues C60, C62, C75, and C78 each coordinate Zn(2+). Mg(2+) contacts are provided by D450, D452, and D454. C818, C892, C899, and C902 together coordinate Zn(2+).

The protein belongs to the RNA polymerase beta' chain family. The RNAP catalytic core consists of 2 alpha, 1 beta, 1 beta' and 1 omega subunit. When a sigma factor is associated with the core the holoenzyme is formed, which can initiate transcription. Mg(2+) serves as cofactor. It depends on Zn(2+) as a cofactor.

The enzyme catalyses RNA(n) + a ribonucleoside 5'-triphosphate = RNA(n+1) + diphosphate. In terms of biological role, DNA-dependent RNA polymerase catalyzes the transcription of DNA into RNA using the four ribonucleoside triphosphates as substrates. The chain is DNA-directed RNA polymerase subunit beta' from Lactococcus lactis subsp. cremoris (strain MG1363).